Here is a 455-residue protein sequence, read N- to C-terminus: MGIPVNSENVNDETEGDVAGKEVYYLCGNSLGLMPKDTKETVTRELDAWRDRAVESHFKHPTDTSWVDIDLPVVPLLAPIVGGKNEEVAVMNTLTANLNSLLVSFYRPTKKRFKIVFEKKAFPSDYYAFYNQCRLHNFDPNECILQISARPNETFLRTEDILKVIEENNESIALVCLPGIQYYSGQLFEIERITKFAHQYPEIIVGWDLAHAVGNVPLKLHDWGVDFACWCSYKYLNSGPGSIGGLFIHEKWHHSALKFGDDVNHDEYRPRLAGWWGNNNEKRFQMLEKFEPIKGALGFRQSNPSVLDVVCLQSSLKIFQKYGGVENLRLKSLKLTKYLINQLQKSPYYHPKKQSSKEELGFRIITPIQNESQYGAQISIQLTPSRLTGKNKDTMEIVFEYMHRHGVVVDERKPNVIRISPVPLYNTFQDVFTTVAILNSALDSVKKSIKALKSN.

Pyridoxal 5'-phosphate-binding positions include leucine 94, threonine 95, 122-125 (FPSD), aspartate 208, histidine 211, and tyrosine 233. Lysine 234 bears the N6-(pyridoxal phosphate)lysine mark. Residues tryptophan 275 and asparagine 303 each contribute to the pyridoxal 5'-phosphate site.

Belongs to the kynureninase family. As to quaternary structure, homodimer. Requires pyridoxal 5'-phosphate as cofactor.

It localises to the cytoplasm. It carries out the reaction L-kynurenine + H2O = anthranilate + L-alanine + H(+). The catalysed reaction is 3-hydroxy-L-kynurenine + H2O = 3-hydroxyanthranilate + L-alanine + H(+). It functions in the pathway amino-acid degradation; L-kynurenine degradation; L-alanine and anthranilate from L-kynurenine: step 1/1. Its pathway is cofactor biosynthesis; NAD(+) biosynthesis; quinolinate from L-kynurenine: step 2/3. Its function is as follows. Catalyzes the cleavage of L-kynurenine (L-Kyn) and L-3-hydroxykynurenine (L-3OHKyn) into anthranilic acid (AA) and 3-hydroxyanthranilic acid (3-OHAA), respectively. The polypeptide is Kynureninase (Vanderwaltozyma polyspora (strain ATCC 22028 / DSM 70294 / BCRC 21397 / CBS 2163 / NBRC 10782 / NRRL Y-8283 / UCD 57-17) (Kluyveromyces polysporus)).